The following is a 210-amino-acid chain: Large ribosomal subunit protein uL4 (210 aa).

Residues 41–79 (MANARQGTASTKTRAEVRGGGRKPWRQKGTGRARAGSNR) form a disordered region. The span at 43–52 (NARQGTASTK) shows a compositional bias: polar residues. Positions 60-71 (GGRKPWRQKGTG) are enriched in basic residues.

Belongs to the universal ribosomal protein uL4 family. As to quaternary structure, part of the 50S ribosomal subunit.

Functionally, one of the primary rRNA binding proteins, this protein initially binds near the 5'-end of the 23S rRNA. It is important during the early stages of 50S assembly. It makes multiple contacts with different domains of the 23S rRNA in the assembled 50S subunit and ribosome. Forms part of the polypeptide exit tunnel. This chain is Large ribosomal subunit protein uL4, found in Cyanothece sp. (strain PCC 7425 / ATCC 29141).